Reading from the N-terminus, the 235-residue chain is Golgi to ER traffic protein 1 (235 aa).

A topological domain (lumenal) is located at residue Met-1. The helical transmembrane segment at 2-21 (HWAAAVAIFFIVVTKFLQYT) threads the bilayer. Topologically, residues 22–104 (NKYHEKWISK…AFQAHLHKLR (83 aa)) are cytoplasmic. Positions 68–104 (WTKNNRKLDSLDKEINNLKDEIQSENKAFQAHLHKLR) form a coiled coil. The chain crosses the membrane as a helical span at residues 105-125 (LLALTVPFFVFKIMYGKTPVY). Residues 126-181 (KLSSSTSTLFPTFVSGVWSQGWLYVLLHPLRTISQKWHIMEGKFGASKFDDMALQS) lie on the Lumenal side of the membrane. The helical transmembrane segment at 182–198 (VSLGIWVWALMNVINGV) threads the bilayer. The Cytoplasmic segment spans residues 199 to 235 (EFIVKQLFLTPKMEAPASVETQEEKALDAVDDAIILD).

It belongs to the WRB/GET1 family. Component of the Golgi to ER traffic (GET) complex, which is composed of GET1, GET2 and GET3. Within the complex, GET1 and GET2 form a heterotetramer which is stabilized by phosphatidylinositol binding and which binds to the GET3 homodimer.

The protein localises to the endoplasmic reticulum membrane. It is found in the golgi apparatus membrane. Required for the post-translational delivery of tail-anchored (TA) proteins to the endoplasmic reticulum. Together with GET2, acts as a membrane receptor for soluble GET3, which recognizes and selectively binds the transmembrane domain of TA proteins in the cytosol. The GET complex cooperates with the HDEL receptor ERD2 to mediate the ATP-dependent retrieval of resident ER proteins that contain a C-terminal H-D-E-L retention signal from the Golgi to the ER. This chain is Golgi to ER traffic protein 1, found in Saccharomyces cerevisiae (strain RM11-1a) (Baker's yeast).